A 261-amino-acid chain; its full sequence is NAD kinase (261 aa).

D54 serves as the catalytic Proton acceptor. NAD(+) is bound by residues 54 to 55 (DG), 123 to 124 (ND), R150, D152, and 163 to 168 (TAYSLS).

It belongs to the NAD kinase family. The cofactor is a divalent metal cation.

It is found in the cytoplasm. The enzyme catalyses NAD(+) + ATP = ADP + NADP(+) + H(+). Functionally, involved in the regulation of the intracellular balance of NAD and NADP, and is a key enzyme in the biosynthesis of NADP. Catalyzes specifically the phosphorylation on 2'-hydroxyl of the adenosine moiety of NAD to yield NADP. This is NAD kinase from Caldicellulosiruptor bescii (strain ATCC BAA-1888 / DSM 6725 / KCTC 15123 / Z-1320) (Anaerocellum thermophilum).